The sequence spans 315 residues: Acetaldehyde dehydrogenase (315 aa).

An NAD(+)-binding site is contributed by 13 to 16 (SGNI). The active-site Acyl-thioester intermediate is the Cys-143. Residues 174–182 (SAGPGTRKN) and Asn-285 contribute to the NAD(+) site.

The protein belongs to the acetaldehyde dehydrogenase family.

It catalyses the reaction acetaldehyde + NAD(+) + CoA = acetyl-CoA + NADH + H(+). This chain is Acetaldehyde dehydrogenase, found in Shewanella woodyi (strain ATCC 51908 / MS32).